A 334-amino-acid polypeptide reads, in one-letter code: Beta-ketoacyl-[acyl-carrier-protein] synthase III (334 aa).

Residues Cys-114 and His-253 contribute to the active site. The ACP-binding stretch occupies residues 254 to 258; that stretch reads QANIR. Asn-283 is an active-site residue.

It belongs to the thiolase-like superfamily. FabH family. Homodimer.

Its subcellular location is the cytoplasm. It carries out the reaction malonyl-[ACP] + acetyl-CoA + H(+) = 3-oxobutanoyl-[ACP] + CO2 + CoA. Its pathway is lipid metabolism; fatty acid biosynthesis. Its function is as follows. Catalyzes the condensation reaction of fatty acid synthesis by the addition to an acyl acceptor of two carbons from malonyl-ACP. Catalyzes the first condensation reaction which initiates fatty acid synthesis and may therefore play a role in governing the total rate of fatty acid production. Possesses both acetoacetyl-ACP synthase and acetyl transacylase activities. Its substrate specificity determines the biosynthesis of branched-chain and/or straight-chain of fatty acids. The sequence is that of Beta-ketoacyl-[acyl-carrier-protein] synthase III from Campylobacter concisus (strain 13826).